Here is a 799-residue protein sequence, read N- to C-terminus: E3 UFM1-protein ligase 1 homolog (799 aa).

The disordered stretch occupies residues 429 to 483 (TTTTTTTQPSKKKDNLINSDDDDNQDNNKKSSKGKNKKSKQQQSSIQKLINDSED). The segment covering 458-468 (KSSKGKNKKSK) has biased composition (basic residues). Positions 469 to 478 (QQQSSIQKLI) are enriched in low complexity.

Belongs to the UFL1 family.

Its function is as follows. E3 UFM1-protein ligase that mediates ufmylation of target proteins. The chain is E3 UFM1-protein ligase 1 homolog from Dictyostelium discoideum (Social amoeba).